Reading from the N-terminus, the 964-residue chain is Myocardin-related transcription factor A (964 aa).

The interval 1 to 291 (MTLLEPEMLM…KQDKGAPAMD (291 aa)) is mediates interaction with SCAI and ACTB. One copy of the RPEL 1 repeat lies at 15–40 (SVLQLKLQQRRTREELVSQGIMPPLK). Serine 41 carries the post-translational modification Phosphoserine. An intervening spacer sequence 1 region spans residues 41–58 (SPAAFHEQRRSLERARTE). The stretch at 59 to 84 (DYLKRKIRSRPERAELVRMHILEETS) is one RPEL 2 repeat. A Bipartite Nuclear localization signal motif is present at residues 62–100 (KRKIRSRPERAELVRMHILEETSAEPSLQAKQLKLKRAR). Positions 85–102 (AEPSLQAKQLKLKRARLA) are intervening spacer sequence 2. One copy of the RPEL 3 repeat lies at 103-128 (DDLNEKIAQRPGPMELVEKNILPVES). 2 disordered regions span residues 145–292 (ADSS…AMDS) and 328–371 (LPAP…RQSS). Serine 159, serine 174, and serine 191 each carry phosphoserine. Residues 186-197 (SATSISPTQVLS) show a composition bias toward polar residues. Positions 215–224 (PPLPPAPLLP) are enriched in pro residues. The segment covering 251-266 (ASEKSQRSKKAKELKP) has biased composition (basic and acidic residues). Low complexity predominate over residues 340–365 (GSSAPTPSRSLSTSSSPSSGTPGPSG). Serine 349 and serine 351 each carry phosphoserine. The residue at position 352 (threonine 352) is a Phosphothreonine. A phosphoserine mark is found at serine 355 and serine 358. Position 360 is a phosphothreonine (threonine 360). Serine 371 bears the Phosphoserine mark. In terms of domain architecture, SAP spans 385–419 (LDDMKVAELKQELKLRSLPVSGTKTELIERLRAYQ). Serine 423 and serine 484 each carry phosphoserine. Positions 484 to 508 (STGSTPPVSPTPSERSLLSTGDENS) are disordered. At threonine 485 the chain carries Phosphothreonine. A Phosphoserine modification is found at serine 487. Position 488 is a phosphothreonine (threonine 488). Residue serine 492 is modified to Phosphoserine. Residue threonine 494 is modified to Phosphothreonine. Serine 496 carries the phosphoserine modification. A compositionally biased stretch (polar residues) spans 497 to 508 (ERSLLSTGDENS). Residues serine 520, serine 530, serine 544, and serine 548 each carry the phosphoserine modification. Residues 552 to 600 (RAELEGLDKDQMLQEKDKQIEELTRMLQQKQQLVELLRLQLEQQKRAQQ) adopt a coiled-coil conformation. Phosphoserine occurs at positions 605, 606, 651, 687, 718, 724, and 728. The segment at 638-673 (TTNHGDTQAPAPESPPVVVKQEAGPPEPDLAPSSQL) is disordered. Disordered stretches follow at residues 706–779 (NKSA…SSSQ) and 796–849 (ADFK…RLED). Over residues 715 to 727 (PAGSPQQPLSQPG) the composition is skewed to low complexity. Residues 764–779 (TVTQQPKQQENGSSSQ) are compositionally biased toward polar residues. Basic and acidic residues predominate over residues 796 to 810 (ADFKEPPSLPGKEKS). Serine 810 is modified (phosphoserine). Phosphothreonine is present on threonine 822. 2 positions are modified to phosphoserine: serine 826 and serine 840. The residue at position 842 (threonine 842) is a Phosphothreonine. At serine 892 the chain carries Phosphoserine.

In terms of assembly, interacts with SRF, forming the SRF-MRTFA nuclear complex which binds the 5'-CArG-3' consensus motif (CArG box) on DNA via SRF. Interacts (via RPEL repeats) with globular actin (G-actin), thereby regulating its subcellular location and activity of the complex formed with SRF. Either forms a trivalent (by binding three G-actin monomers) or pentavalent (by binding five G-actin monomers) complex with G-actin. Forms a nuclear ternary complex with SCAI and SRF, leading to suppress MRTFA-induced SRF transcriptional activity. Interacts with beta-actin (ACTB); interaction with ACTB prevents interaction with SCAI. Interacts with MRTFB. In terms of processing, phosphorylation at Ser-41 by Erk inhibits binding of globular actin (G-actin), unmasking the nuclear localization signal (NLS) and promoting nuclear import. As to expression, expressed in heart, brain, spleen, lung, liver, muscle, kidney and testis.

The protein localises to the cytoplasm. Its subcellular location is the nucleus. Transcription coactivator that associates with the serum response factor (SRF) transcription factor to control expression of genes regulating the cytoskeleton during development, morphogenesis and cell migration. The SRF-MRTFA complex activity responds to Rho GTPase-induced changes in cellular globular actin (G-actin) concentration, thereby coupling cytoskeletal gene expression to cytoskeletal dynamics. MRTFA binds G-actin via its RPEL repeats, regulating activity of the MRTFA-SRF complex. Activity is also regulated by filamentous actin (F-actin) in the nucleus. The sequence is that of Myocardin-related transcription factor A (Mrtfa) from Mus musculus (Mouse).